A 157-amino-acid chain; its full sequence is MPRRREVPKREILPDPKFGNVELSKFMNVIMEGGKKAVAERIIYGALELIQKKHPDKDPLEAFTVAINNVKPMVEVKSRRVGGANYQVPVEVRPVRRLALSMRWLKEAARKRGEKSMAQRLANELLEATEGRGGAMKRRDEVHRMAEANKAFSHFRF.

Belongs to the universal ribosomal protein uS7 family. Part of the 30S ribosomal subunit. Contacts proteins S9 and S11.

Functionally, one of the primary rRNA binding proteins, it binds directly to 16S rRNA where it nucleates assembly of the head domain of the 30S subunit. Is located at the subunit interface close to the decoding center, probably blocks exit of the E-site tRNA. In Paracidovorax citrulli (strain AAC00-1) (Acidovorax citrulli), this protein is Small ribosomal subunit protein uS7.